The primary structure comprises 470 residues: Serine carboxypeptidase ctsa-4.1 (470 aa).

The signal sequence occupies residues 1–19; it reads MKLLSILFIFVSSYSFCLA. N-linked (GlcNAc...) asparagine glycosylation is present at Asn-132. Ser-169 is an active-site residue. The N-linked (GlcNAc...) asparagine glycan is linked to Asn-316. Asp-380 is a catalytic residue. Asn-396 carries an N-linked (GlcNAc...) asparagine glycan. Residue His-441 is part of the active site.

Belongs to the peptidase S10 family.

It carries out the reaction Release of a C-terminal amino acid with broad specificity.. The chain is Serine carboxypeptidase ctsa-4.1 from Caenorhabditis elegans.